A 200-amino-acid chain; its full sequence is Proteasome subunit beta 2 (200 aa).

A propeptide spans 1–10 (MSDQLELMTG) (removed in mature form; by autocatalysis). The active-site Nucleophile is T11.

It belongs to the peptidase T1B family. As to quaternary structure, the 20S proteasome core is composed of 14 alpha and 14 beta subunits that assemble into four stacked heptameric rings, resulting in a barrel-shaped structure. The two inner rings, each composed of seven catalytic beta subunits, are sandwiched by two outer rings, each composed of seven alpha subunits. The catalytic chamber with the active sites is on the inside of the barrel. Has a gated structure, the ends of the cylinder being occluded by the N-termini of the alpha-subunits. Is capped at one or both ends by the proteasome regulatory ATPase, PAN.

Its subcellular location is the cytoplasm. It carries out the reaction Cleavage of peptide bonds with very broad specificity.. With respect to regulation, the formation of the proteasomal ATPase PAN-20S proteasome complex, via the docking of the C-termini of PAN into the intersubunit pockets in the alpha-rings, triggers opening of the gate for substrate entry. Interconversion between the open-gate and close-gate conformations leads to a dynamic regulation of the 20S proteasome proteolysis activity. In terms of biological role, component of the proteasome core, a large protease complex with broad specificity involved in protein degradation. The protein is Proteasome subunit beta 2 of Caldivirga maquilingensis (strain ATCC 700844 / DSM 13496 / JCM 10307 / IC-167).